Consider the following 90-residue polypeptide: Nodulation protein F (90 aa).

Positions Q4–A89 constitute a Carrier domain. O-(pantetheine 4'-phosphoryl)serine is present on S46. Residues R65–H90 are disordered. The span at R78–H90 shows a compositional bias: basic residues.

In terms of processing, 4'-phosphopantetheine is transferred from CoA to a specific serine of apo-NodF.

Proposed to synthesize nod factor fatty acyl chain. Involved in trans-2,trans-4,trans-6,cis-11-octadecatetraenoic acid biosynthesis. The sequence is that of Nodulation protein F (nodF) from Rhizobium meliloti (Ensifer meliloti).